Consider the following 231-residue polypeptide: Monothiol glutaredoxin-6 (231 aa).

The signal sequence occupies residues 1-29 (MIPSNKRNARILSITTLLLLLVFFVAQNA). Positions 116-219 (QKEYSLILDL…ESLQVWSDGK (104 aa)) constitute a Glutaredoxin domain. Cys-136 contributes to the [2Fe-2S] cluster binding site.

The protein belongs to the glutaredoxin family. Monothiol subfamily.

The protein localises to the vacuole. The chain is Monothiol glutaredoxin-6 (GRX6) from Saccharomyces cerevisiae (strain ATCC 204508 / S288c) (Baker's yeast).